We begin with the raw amino-acid sequence, 125 residues long: Fluoride-specific ion channel FluC (125 aa).

Helical transmembrane passes span 1–21 (MIQALLVAVGGAIGSVLRYFV), 32–52 (AFPWGTLAVNVVGCFVIGVFA), 68–88 (LLITGFLGGFTTFSAFSLDAI), and 101–121 (IYIAASVGLSMAAVFAGLAIM). 2 residues coordinate Na(+): Gly75 and Thr78.

The protein belongs to the fluoride channel Fluc/FEX (TC 1.A.43) family.

The protein localises to the cell inner membrane. The catalysed reaction is fluoride(in) = fluoride(out). Its activity is regulated as follows. Na(+) is not transported, but it plays an essential structural role and its presence is essential for fluoride channel function. In terms of biological role, fluoride-specific ion channel. Important for reducing fluoride concentration in the cell, thus reducing its toxicity. This is Fluoride-specific ion channel FluC from Rhizobium etli (strain ATCC 51251 / DSM 11541 / JCM 21823 / NBRC 15573 / CFN 42).